The following is an 82-amino-acid chain: uncharacterized protein (82 aa).

The next 3 membrane-spanning stretches (helical) occupy residues 4-26 (LDIA…TCIC), 31-48 (LMPM…FTIF), and 52-74 (FLGW…LIVV).

The protein resides in the cell membrane. This is an uncharacterized protein from Bacillus subtilis (strain 168).